The chain runs to 404 residues: Double-stranded RNA-binding protein 5 (404 aa).

2 DRBM domains span residues 1–70 (MYKN…RLSL) and 87–155 (VYKN…SLKQ). 3 disordered regions span residues 195-236 (RRRR…STEE), 263-320 (GGRT…RRNA), and 336-362 (RRRP…FSDP). The span at 263–280 (GGRTQDTASPAPAAAAAS) shows a compositional bias: low complexity. A compositionally biased stretch (basic residues) spans 302-316 (AGAHAARRHAARQGG).

In terms of biological role, binds double-stranded RNA. The chain is Double-stranded RNA-binding protein 5 (DRB5) from Oryza sativa subsp. japonica (Rice).